Here is a 319-residue protein sequence, read N- to C-terminus: CBBY-like protein (319 aa).

Residues 1 to 65 (MATVKISLSL…YRSSRSVGVT (65 aa)) constitute a chloroplast transit peptide. Asp-82 acts as the Nucleophile in catalysis. Residues Asp-82 and Asp-84 each contribute to the Mg(2+) site. Substrate is bound at residue Asp-82. Asp-84 (proton donor) is an active-site residue. Residues Glu-91, 125 to 129 (GGKER), 158 to 161 (HKQK), and 198 to 204 (STSNEKA) contribute to the substrate site. A Mg(2+)-binding site is contributed by Asp-258.

Belongs to the HAD-like hydrolase superfamily. DOG/GPP family. The cofactor is Mg(2+).

It is found in the plastid. It localises to the chloroplast. The catalysed reaction is D-xylulose 1,5-bisphosphate + H2O = D-xylulose 5-phosphate + phosphate. Highly selective xylulose-1,5-bisphosphate (XuBP) phosphatase. Also shows activity towards ribulose-1,5-bisphosphate (RuBP) and fructose-1,6-bisphosphate (FBP), but not towards fructose-6-phosphate (F6P) or ribulose-5-phosphate (Ru5P). Degrades xylulose-1,5-bisphosphate, a potent inhibitor of rubisco produced by the rubisco itself. The polypeptide is CBBY-like protein (Arabidopsis thaliana (Mouse-ear cress)).